We begin with the raw amino-acid sequence, 114 residues long: UPF0145 protein SSO1976 (114 aa).

Belongs to the UPF0145 family.

This is UPF0145 protein SSO1976 from Saccharolobus solfataricus (strain ATCC 35092 / DSM 1617 / JCM 11322 / P2) (Sulfolobus solfataricus).